Reading from the N-terminus, the 227-residue chain is 7-cyano-7-deazaguanine synthase (227 aa).

9 to 19 (LSGGLDSATVL) provides a ligand contact to ATP. 4 residues coordinate Zn(2+): C189, C199, C202, and C205.

This sequence belongs to the QueC family. The cofactor is Zn(2+).

It catalyses the reaction 7-carboxy-7-deazaguanine + NH4(+) + ATP = 7-cyano-7-deazaguanine + ADP + phosphate + H2O + H(+). It functions in the pathway purine metabolism; 7-cyano-7-deazaguanine biosynthesis. In terms of biological role, catalyzes the ATP-dependent conversion of 7-carboxy-7-deazaguanine (CDG) to 7-cyano-7-deazaguanine (preQ(0)). The polypeptide is 7-cyano-7-deazaguanine synthase (Cupriavidus necator (strain ATCC 17699 / DSM 428 / KCTC 22496 / NCIMB 10442 / H16 / Stanier 337) (Ralstonia eutropha)).